The sequence spans 250 residues: 1-(5-phosphoribosyl)-5-[(5-phosphoribosylamino)methylideneamino] imidazole-4-carboxamide isomerase (250 aa).

The active-site Proton acceptor is Asp-8. Catalysis depends on Asp-131, which acts as the Proton donor.

Belongs to the HisA/HisF family.

The protein resides in the cytoplasm. The catalysed reaction is 1-(5-phospho-beta-D-ribosyl)-5-[(5-phospho-beta-D-ribosylamino)methylideneamino]imidazole-4-carboxamide = 5-[(5-phospho-1-deoxy-D-ribulos-1-ylimino)methylamino]-1-(5-phospho-beta-D-ribosyl)imidazole-4-carboxamide. It participates in amino-acid biosynthesis; L-histidine biosynthesis; L-histidine from 5-phospho-alpha-D-ribose 1-diphosphate: step 4/9. The chain is 1-(5-phosphoribosyl)-5-[(5-phosphoribosylamino)methylideneamino] imidazole-4-carboxamide isomerase from Paraburkholderia phytofirmans (strain DSM 17436 / LMG 22146 / PsJN) (Burkholderia phytofirmans).